The chain runs to 205 residues: CD83 antigen (205 aa).

Residues 1–19 form the signal peptide; that stretch reads MSRGLQLLLLSCAYSLAPA. The Ig-like V-type domain maps to 20–114; sequence TPEVKVACSE…YRCTLQDPDG (95 aa). At 20–144 the chain is on the extracellular side; it reads TPEVKVACSE…EETFKKYRAE (125 aa). C35 and C107 form a disulfide bridge. Over residues 60 to 69 the composition is skewed to basic and acidic residues; the sequence is METPQEDHLR. The disordered stretch occupies residues 60–81; it reads METPQEDHLRGQHYHQKGQNGS. N79, N96, and N117 each carry an N-linked (GlcNAc...) asparagine glycan. The helical transmembrane segment at 145-166 threads the bilayer; sequence IVLLLALVIFYLTLIIFTCKFA. The Cytoplasmic portion of the chain corresponds to 167–205; it reads RLQSIFPDFSKAGMERAFLPVTSPNKHLGLVTPHKTELV.

As to quaternary structure, monomer. Homodimer. Homotrimer. Interacts with MARCHF1; this interaction antagonizes MARCHF1-mediated MHC II and CD86 down-regulation. Glycosylated when expressed on activated dendritic cells. As to expression, expressed by activated lymphocytes, Langerhans cells and activatd dendritic cells.

The protein localises to the membrane. In terms of biological role, transmembrane glycoprotein predominantly found on the surface of many immune cells including dendritic cells or lymphocytes that plays various roles in immune response regulation. Plays an essential role in CD4(+) T-selection, differentiation and stability by regulating the activity of the major E3 ubiquitin ligase responsible for controlling MHCII trafficking MARCHF8. Also inhibits MARCHF1 association with MHCII or CD86 to prevent their ubiquitination and subsequent degradation. In addition, acts as an important modulator of protective responses against acute infections. In Homo sapiens (Human), this protein is CD83 antigen (CD83).